The chain runs to 424 residues: CUGBP Elav-like family member 4 (424 aa).

The interval valine 8–asparagine 27 is disordered. The segment covering alanine 9 to glycine 24 has biased composition (polar residues). RRM domains are found at residues isoleucine 47 to serine 128 and proline 342 to proline 417.

It belongs to the CELF/BRUNOL family.

The protein localises to the nucleus. The protein resides in the cytoplasm. Functionally, RNA-binding protein that may be implicated in the regulation of pre-mRNA alternative splicing. The sequence is that of CUGBP Elav-like family member 4 (celf4) from Xenopus tropicalis (Western clawed frog).